Here is a 131-residue protein sequence, read N- to C-terminus: Sirohydrochlorin cobaltochelatase (131 aa).

H12 acts as the Proton acceptor in catalysis. Co(2+) contacts are provided by H12 and H78. H12 and H78 together coordinate Ni(2+). 73-78 (LASGVH) provides a ligand contact to substrate.

Belongs to the CbiX family. CbiXS subfamily. As to quaternary structure, homotetramer; dimer of dimers.

The enzyme catalyses Co-sirohydrochlorin + 2 H(+) = sirohydrochlorin + Co(2+). It carries out the reaction Ni-sirohydrochlorin + 2 H(+) = sirohydrochlorin + Ni(2+). It participates in cofactor biosynthesis; adenosylcobalamin biosynthesis; cob(II)yrinate a,c-diamide from sirohydrochlorin (anaerobic route): step 1/10. Catalyzes the insertion of Co(2+) into sirohydrochlorin as part of the anaerobic pathway to cobalamin biosynthesis. Involved in the biosynthesis of the unique nickel-containing tetrapyrrole coenzyme F430, the prosthetic group of methyl-coenzyme M reductase (MCR), which plays a key role in methanogenesis and anaerobic methane oxidation. Catalyzes the insertion of Ni(2+) into sirohydrochlorin to yield Ni-sirohydrochlorin. This chain is Sirohydrochlorin cobaltochelatase, found in Methanococcoides burtonii (strain DSM 6242 / NBRC 107633 / OCM 468 / ACE-M).